A 157-amino-acid polypeptide reads, in one-letter code: Probable succinate transporter subunit YjjB (157 aa).

4 helical membrane-spanning segments follow: residues 2 to 22, 55 to 75, 87 to 107, and 129 to 149; these read GIIS…IPAV, AGFN…SIGI, IFTV…TAMI, and FLKA…PGLW.

It belongs to the ThrE exporter (TC 2.A.79) family. The transporter is composed of YjjB and YjjP.

It is found in the cell inner membrane. In terms of biological role, involved in succinate export with YjjP. Both proteins are required for export. In Klebsiella pneumoniae subsp. pneumoniae (strain ATCC 700721 / MGH 78578), this protein is Probable succinate transporter subunit YjjB.